A 361-amino-acid chain; its full sequence is Phospho-N-acetylmuramoyl-pentapeptide-transferase (361 aa).

Helical transmembrane passes span 27 to 47, 72 to 92, 99 to 119, 139 to 159, 169 to 189, 200 to 220, 240 to 260, 264 to 284, 289 to 309, and 338 to 358; these read GALF…ISLL, TPTM…FLWA, VWIT…DDYL, ALIA…GLAY, AIVN…VGAG, GLAI…AYLV, LAVV…FNAP, IFMG…VAVA, IVLA…IIQV, and QVVI…LATL.

This sequence belongs to the glycosyltransferase 4 family. MraY subfamily. Mg(2+) serves as cofactor.

The protein localises to the cell inner membrane. It catalyses the reaction UDP-N-acetyl-alpha-D-muramoyl-L-alanyl-gamma-D-glutamyl-meso-2,6-diaminopimeloyl-D-alanyl-D-alanine + di-trans,octa-cis-undecaprenyl phosphate = di-trans,octa-cis-undecaprenyl diphospho-N-acetyl-alpha-D-muramoyl-L-alanyl-D-glutamyl-meso-2,6-diaminopimeloyl-D-alanyl-D-alanine + UMP. It participates in cell wall biogenesis; peptidoglycan biosynthesis. In terms of biological role, catalyzes the initial step of the lipid cycle reactions in the biosynthesis of the cell wall peptidoglycan: transfers peptidoglycan precursor phospho-MurNAc-pentapeptide from UDP-MurNAc-pentapeptide onto the lipid carrier undecaprenyl phosphate, yielding undecaprenyl-pyrophosphoryl-MurNAc-pentapeptide, known as lipid I. In Methylobacterium sp. (strain 4-46), this protein is Phospho-N-acetylmuramoyl-pentapeptide-transferase.